Consider the following 194-residue polypeptide: Molybdenum cofactor guanylyltransferase (194 aa).

GTP-binding positions include 12 to 14 (LAG), K25, N53, D70, and D100. Mg(2+) is bound at residue D100.

The protein belongs to the MobA family. As to quaternary structure, monomer. Mg(2+) serves as cofactor.

It is found in the cytoplasm. The catalysed reaction is Mo-molybdopterin + GTP + H(+) = Mo-molybdopterin guanine dinucleotide + diphosphate. Its function is as follows. Transfers a GMP moiety from GTP to Mo-molybdopterin (Mo-MPT) cofactor (Moco or molybdenum cofactor) to form Mo-molybdopterin guanine dinucleotide (Mo-MGD) cofactor. The polypeptide is Molybdenum cofactor guanylyltransferase (Photobacterium profundum (strain SS9)).